The sequence spans 1216 residues: RAB11-binding protein RELCH (1216 aa).

Disordered regions lie at residues 1-73 (MAAM…GLPG) and 135-177 (GNFE…QLNR). Alanine 2 bears the N-acetylalanine mark. A phosphoserine mark is found at serine 20 and serine 22. Residues 21 to 31 (DSDEDDDEVAA) show a composition bias toward acidic residues. Threonine 32 is subject to Phosphothreonine. Residues serine 54 and serine 56 each carry the phosphoserine modification. Over residues 148 to 163 (GAPGVPGAAGVGGAGG) the composition is skewed to gly residues. Phosphoserine is present on residues serine 180 and serine 182. A Phosphothreonine modification is found at threonine 183. Serine 186 carries the phosphoserine modification. Positions 197–231 (NRETDEKVAVLEFELRKAKETIQALRANLTKAAEH) form a coiled coil. The LisH domain maps to 255–287 (EKRALNFLVNEFLLKNNYKLTSITFSDENDDQD). Positions 359 to 397 (VQKLEDKISLLNSEKWSLMEQIRRLKSEMDFLKNEHFAI) form a coiled coil. A Phosphoserine modification is found at serine 385. A disordered region spans residues 401–477 (CDSVQPPLDQ…SSLSSKKTVH (77 aa)). A compositionally biased stretch (basic and acidic residues) spans 411-435 (LPHKDSEDSGQHPDVNSSDKGKNTD). Serine 453 is subject to Phosphoserine. The tract at residues 497 to 779 (CRMSADSRLG…SSKAKLHGEV (283 aa)) is interaction with RAB11A and RAB11B. HEAT repeat units lie at residues 601 to 639 (LLPQ…RSSL) and 640 to 679 (VLSM…KYHQ). Serine 792 is modified (phosphoserine). One copy of the HEAT 3 repeat lies at 1004–1042 (VAPALVTLSSDPEFSVRIATIPAFGTIMETVIQRELLER). Serine 1149 carries the phosphoserine modification.

The protein resides in the recycling endosome. The protein localises to the golgi apparatus. It localises to the trans-Golgi network. In terms of biological role, regulates intracellular cholesterol distribution from recycling endosomes to the trans-Golgi network through interactions with RAB11 and OSBP. Functions in membrane tethering and promotes OSBP-mediated cholesterol transfer between RAB11-bound recycling endosomes and OSBP-bound Golgi-like membranes. The chain is RAB11-binding protein RELCH from Homo sapiens (Human).